Reading from the N-terminus, the 388-residue chain is Succinate--CoA ligase [ADP-forming] subunit beta (388 aa).

Residues 9–244 form the ATP-grasp domain; sequence KQLFAEFGLP…PSQEDKREAH (236 aa). ATP contacts are provided by residues K46, 53–55, E99, S102, and E107; that span reads GRG. Residues N199 and D213 each contribute to the Mg(2+) site. Substrate-binding positions include N264 and 321 to 323; that span reads GIV.

It belongs to the succinate/malate CoA ligase beta subunit family. As to quaternary structure, heterotetramer of two alpha and two beta subunits. The cofactor is Mg(2+).

The enzyme catalyses succinate + ATP + CoA = succinyl-CoA + ADP + phosphate. It carries out the reaction GTP + succinate + CoA = succinyl-CoA + GDP + phosphate. It participates in carbohydrate metabolism; tricarboxylic acid cycle; succinate from succinyl-CoA (ligase route): step 1/1. Succinyl-CoA synthetase functions in the citric acid cycle (TCA), coupling the hydrolysis of succinyl-CoA to the synthesis of either ATP or GTP and thus represents the only step of substrate-level phosphorylation in the TCA. The beta subunit provides nucleotide specificity of the enzyme and binds the substrate succinate, while the binding sites for coenzyme A and phosphate are found in the alpha subunit. The chain is Succinate--CoA ligase [ADP-forming] subunit beta from Vibrio vulnificus (strain YJ016).